The following is a 457-amino-acid chain: Siroheme synthase (457 aa).

A precorrin-2 dehydrogenase /sirohydrochlorin ferrochelatase region spans residues M1 to T204. Residues D22 to V23 and L43 to T44 contribute to the NAD(+) site. S128 carries the phosphoserine modification. The interval G216–H457 is uroporphyrinogen-III C-methyltransferase. P225 lines the S-adenosyl-L-methionine pocket. The active-site Proton acceptor is D248. Residue K270 is the Proton donor of the active site. Residues G301–D303, I306, T331–A332, M382, and G411 each bind S-adenosyl-L-methionine.

The protein in the N-terminal section; belongs to the precorrin-2 dehydrogenase / sirohydrochlorin ferrochelatase family. In the C-terminal section; belongs to the precorrin methyltransferase family.

It carries out the reaction uroporphyrinogen III + 2 S-adenosyl-L-methionine = precorrin-2 + 2 S-adenosyl-L-homocysteine + H(+). The catalysed reaction is precorrin-2 + NAD(+) = sirohydrochlorin + NADH + 2 H(+). It catalyses the reaction siroheme + 2 H(+) = sirohydrochlorin + Fe(2+). It functions in the pathway cofactor biosynthesis; adenosylcobalamin biosynthesis; precorrin-2 from uroporphyrinogen III: step 1/1. The protein operates within cofactor biosynthesis; adenosylcobalamin biosynthesis; sirohydrochlorin from precorrin-2: step 1/1. It participates in porphyrin-containing compound metabolism; siroheme biosynthesis; precorrin-2 from uroporphyrinogen III: step 1/1. Its pathway is porphyrin-containing compound metabolism; siroheme biosynthesis; siroheme from sirohydrochlorin: step 1/1. It functions in the pathway porphyrin-containing compound metabolism; siroheme biosynthesis; sirohydrochlorin from precorrin-2: step 1/1. Multifunctional enzyme that catalyzes the SAM-dependent methylations of uroporphyrinogen III at position C-2 and C-7 to form precorrin-2 via precorrin-1. Then it catalyzes the NAD-dependent ring dehydrogenation of precorrin-2 to yield sirohydrochlorin. Finally, it catalyzes the ferrochelation of sirohydrochlorin to yield siroheme. This Salmonella arizonae (strain ATCC BAA-731 / CDC346-86 / RSK2980) protein is Siroheme synthase.